A 411-amino-acid chain; its full sequence is Immunity-related GTPase family M protein (411 aa).

The disordered stretch occupies residues 1 to 21; that stretch reads MKPSHKSCEAAPLLPKMPETS. In terms of domain architecture, IRG-type G spans 77–253; it reads IPVSIFVTGD…PELRNTLQTD (177 aa). GTP contacts are provided by residues 86-93, 111-115, and 193-195; these read DSGNGMSS, TGVVR, and KLD. Phosphoserine is present on serine 204. 234 to 236 is a GTP binding site; the sequence is SNL. Lysine 272 participates in a covalent cross-link: Glycyl lysine isopeptide (Lys-Gly) (interchain with G-Cter in ubiquitin). Residues 352 to 376 form an alpha-K amphipathic helix region; that stretch reads KLRLMTCTTVNALFCLFKFLPCLCH.

Belongs to the TRAFAC class dynamin-like GTPase superfamily. IRG family. Interacts with ULK1; promoting the coassembly of ULK1 and BECN1. Interacts with BECN1; enhancing BECN1-interacting partners and influencing the composition of the BECN1 complex. Interacts with ATG16L1. Interacts with NOD2; promoting Irgm 'Lys-63'-linked polyubiquitination, which is required for interactions with the core autophagy factors. Interacts with STX17; promoting STX17 recruitment to autophagosomes. Interacts with ATG8 proteins (GABARAP, GABARAPL1, GABARAPL2, MAP1LC3A, MAP1LC3B and MAP1LC3C); promoting STX17 recruitment to autophagosomes. Interacts with TFEB; promoting association between TFEB and PPP3CB and TFEB dephosphorylation. Interacts with PPP3CB; promoting association between TFEB and PPP3CB and TFEB dephosphorylation. Interacts with NLRP3; preventing NLRP3 inflammasome assembly and promoting SQSTM1/p62-dependent autophagic degradation of NLRP3. Interacts with CGAS; promoting SQSTM1/p62-dependent autophagic degradation of CGAS. Interacts with RIGI/RIG-I; promoting SQSTM1/p62-dependent autophagic degradation of RIGI/RIG-I. Interacts with NOD1; promoting SQSTM1/p62-dependent autophagic degradation of RIGI/RIG-I. Interacts with NOD2; promoting SQSTM1/p62-dependent autophagic degradation of RIGI/RIG-I. Interacts with RIPK2; promoting SQSTM1/p62-dependent autophagic degradation of RIGI/RIG-I. Interacts with PIK3CA. In terms of processing, palmitoylated on C-terminal Cys residues. Palmitoylation, together with the alpha-K amphipathic helix, which binds phosphatidylinositol, mediate binding to membranes. Ubiquitinated via 'Lys-63'-linked polyubiquitination in a NOD2-dependent process. 'Lys-63'-linked polyubiquitination is required for interactions with the core autophagy factors. Ubiquitination at Lys-272 by the DCX(WDR77) complex, also named CLR4(WDR77) complex, in intestinal cells, leading to its degradation by the proteasome.

Its subcellular location is the golgi apparatus membrane. The protein localises to the cell membrane. The protein resides in the cytoplasmic vesicle. It is found in the phagosome membrane. It localises to the autophagosome membrane. Its subcellular location is the lysosome membrane. The protein localises to the late endosome membrane. The protein resides in the mitochondrion membrane. It is found in the cell projection. It localises to the phagocytic cup. The catalysed reaction is GTP + H2O = GDP + phosphate + H(+). Immunity-related GTPase that plays important roles in innate immunity and inflammatory response. Acts as a dynamin-like protein that binds to intracellular membranes and promotes remodeling and trafficking of those membranes. Required for clearance of acute protozoan and bacterial infections by interacting with autophagy and lysosome regulatory proteins, thereby promoting the fusion of phagosomes with lysosomes for efficient degradation of cargo including microbes. Regulates selective autophagy, including xenophagy and mitophagy, both directly and indirectly. Directly regulates autophagy by acting as a molecular adapter that promotes the coassembly of the core autophagy machinery to mediate antimicrobial defense: Irgm (1) activates AMPK, which in turn phosphorylates ULK1 and BECN1 to induce autophagy, (2) promotes the coassembly of ULK1 and BECN1, enhancing BECN1-interacting partners and (3) influences the composition of the BECN1 complex, by competing with the negative regulators BCL2 and RUBCN, to trigger autophagy. Also activates autophagy by promoting recruitment of STX17 to autophagosomes. In collaboration with ATG8 proteins, regulate lysosomal biogenesis, a fundamental process for any autophagic pathway, by promoting TFEB dephosphorylation. Also modulates autophagy by assisting with autophagosome formation and preventing lysosomal deacidification. Regulates autophagy by affecting mitochondrial fusion and fission. Also involved in M1 macrophage activation for the production of proinflammatory cytokines. While activating autophagy, acts as a key negative regulator of the inflammatory and interferon responses both by (1) promoting mitophagy and (2) mediating autophagy-dependent degradation of effectors of the inflammatory response. Promotes degradation of damaged and IFNG/IFN-gamma-stressed mitochondria via mitophagy, preventing cytosolic release of ligands that activate inflammation. Negatively regulates interferon-signaling in hematopoietic stem cells, preserving hematopoietic stem cell number and function. Promotes expansion of activated CD4(+) T-cells by inhibiting IFNG/IFN-gamma signaling, thereby preventing Ifng-mediated cell death of CD4(+) T-cells. Acts as a suppressor of inflammation by promoting recruitment of inflammation effectors, such as CGAS, RIGI/RIG-I and NLRP3, to autophagosome membranes, leading to their SQSTM1/p62-dependent autophagic degradation. Also directly inhibits assembly of the NLRP3 inflammasome by preventing the association between NLRP3 and PYCARD. Acts as a negative regulator of antiviral innate immune response by suppressing the RIPK2-dependent pro-inflammatory response: mediates recruitment of RIPosomes, composed of RIPK2 and NOD1 or NOD2, to autophagosome membranes, promoting their SQSTM1/p62-dependent autophagic degradation. This Rattus norvegicus (Rat) protein is Immunity-related GTPase family M protein.